Here is a 483-residue protein sequence, read N- to C-terminus: Cobyric acid synthase (483 aa).

Positions 251 to 438 (ALIVAVPMLP…LHGVFSADRF (188 aa)) constitute a GATase cobBQ-type domain. Cys333 serves as the catalytic Nucleophile. Residue His430 is part of the active site.

It belongs to the CobB/CobQ family. CobQ subfamily.

Its pathway is cofactor biosynthesis; adenosylcobalamin biosynthesis. Functionally, catalyzes amidations at positions B, D, E, and G on adenosylcobyrinic A,C-diamide. NH(2) groups are provided by glutamine, and one molecule of ATP is hydrogenolyzed for each amidation. The chain is Cobyric acid synthase from Brucella melitensis biotype 2 (strain ATCC 23457).